Consider the following 119-residue polypeptide: Phosphoribosyl-AMP cyclohydrolase (119 aa).

Asp-77 is a Mg(2+) binding site. Cys-78 provides a ligand contact to Zn(2+). Positions 79 and 81 each coordinate Mg(2+). 2 residues coordinate Zn(2+): Cys-94 and Cys-101.

The protein belongs to the PRA-CH family. In terms of assembly, homodimer. The cofactor is Mg(2+). It depends on Zn(2+) as a cofactor.

Its subcellular location is the cytoplasm. The enzyme catalyses 1-(5-phospho-beta-D-ribosyl)-5'-AMP + H2O = 1-(5-phospho-beta-D-ribosyl)-5-[(5-phospho-beta-D-ribosylamino)methylideneamino]imidazole-4-carboxamide. It functions in the pathway amino-acid biosynthesis; L-histidine biosynthesis; L-histidine from 5-phospho-alpha-D-ribose 1-diphosphate: step 3/9. In terms of biological role, catalyzes the hydrolysis of the adenine ring of phosphoribosyl-AMP. The protein is Phosphoribosyl-AMP cyclohydrolase of Cereibacter sphaeroides (strain ATCC 17029 / ATH 2.4.9) (Rhodobacter sphaeroides).